Reading from the N-terminus, the 254-residue chain is Uracil-DNA glycosylase (254 aa).

The active-site Proton acceptor is the aspartate 78.

Belongs to the uracil-DNA glycosylase (UDG) superfamily. UNG family.

The protein resides in the cytoplasm. The catalysed reaction is Hydrolyzes single-stranded DNA or mismatched double-stranded DNA and polynucleotides, releasing free uracil.. Excises uracil residues from the DNA which can arise as a result of misincorporation of dUMP residues by DNA polymerase or due to deamination of cytosine. This chain is Uracil-DNA glycosylase, found in Bordetella petrii (strain ATCC BAA-461 / DSM 12804 / CCUG 43448).